The chain runs to 136 residues: MAFCNKLSGILRQGVSQSSNGPVTSMLGSLRYMSSKLFVGGLSWGTDDSSLKQAFTSFGEVTEATVIADRETGRSRGFGFVSFSCEDSANNAIKEMDGKELNGRQIRVNLATERSSAPRSSFGGGGGYGGGGGGGY.

Residues 1–33 (MAFCNKLSGILRQGVSQSSNGPVTSMLGSLRYM) constitute a mitochondrion transit peptide. The 79-residue stretch at 35–113 (SKLFVGGLSW…RQIRVNLATE (79 aa)) folds into the RRM domain. A Phosphoserine modification is found at S43. The segment at 113–136 (ERSSAPRSSFGGGGGYGGGGGGGY) is disordered. Gly residues predominate over residues 122-136 (FGGGGGYGGGGGGGY). Residues 123–135 (GGGGGYGGGGGGG) form a glycine-rich (GR) required for cell-to-cell movement region.

This sequence belongs to the GR-RBP family. Binds to small phloem-mobile single-stranded RNAs (ss-sRNA, e.g. small interfering RNA (siRNA) and microRNA (miRNA)) in the phloeme exudate, including viral-derived sRNA (vsiRNA). As to expression, abundantly expressed in young plants, root tips, and flowers, but weakly in mature leaves and stems, implying highly expression in actively proliferating organs.

Its subcellular location is the mitochondrion. It localises to the secreted. Functionally, possibly has a role in RNA transcription or processing during stress. Binds sequence non-specifically to RNAs and DNAs. Mediates cell-to-cell trafficking of RNA interference (RNAi) signals (small RNAs (sRNA), e.g. small interfering RNA (siRNA) and microRNA (miRNA)) which regulate growth and development, as well as responses to environmental inputs, including pathogen attack; can compromise zucchini yellow mosaic virus (ZYMV) and tobacco rattle virus (TRV) infections at the early stage. This Arabidopsis thaliana (Mouse-ear cress) protein is Glycine-rich RNA-binding protein 4, mitochondrial.